A 182-amino-acid polypeptide reads, in one-letter code: Adenine phosphoribosyltransferase (182 aa).

Belongs to the purine/pyrimidine phosphoribosyltransferase family. Homodimer.

The protein localises to the cytoplasm. The catalysed reaction is AMP + diphosphate = 5-phospho-alpha-D-ribose 1-diphosphate + adenine. It functions in the pathway purine metabolism; AMP biosynthesis via salvage pathway; AMP from adenine: step 1/1. Its function is as follows. Catalyzes a salvage reaction resulting in the formation of AMP, that is energically less costly than de novo synthesis. In Campylobacter fetus subsp. fetus (strain 82-40), this protein is Adenine phosphoribosyltransferase.